The following is a 437-amino-acid chain: GTPase Der (437 aa).

EngA-type G domains follow at residues 3–168 (PLIA…PESE) and 178–353 (VKLA…RNRS). GTP-binding positions include 9–16 (GRPNVGKS), 56–60 (DTGGY), 120–123 (NKVE), 184–191 (GRPNVGKS), 231–235 (DTAGL), and 296–299 (NKWD). Positions 354–437 (RKISTSSLNR…VPISLRFMEK (84 aa)) constitute a KH-like domain.

It belongs to the TRAFAC class TrmE-Era-EngA-EngB-Septin-like GTPase superfamily. EngA (Der) GTPase family. In terms of assembly, associates with the 50S ribosomal subunit.

In terms of biological role, GTPase that plays an essential role in the late steps of ribosome biogenesis. The protein is GTPase Der of Chlorobium limicola (strain DSM 245 / NBRC 103803 / 6330).